We begin with the raw amino-acid sequence, 406 residues long: MGMESSPESPQPVRVVLQAVGGWIGRLGRIWIEGQVAELHRRGGMAYITLRDPVANVSARVTCSIRVLRAADPPPEQGARVVVYAKPDFYVPRGTFSFQALEIRHVGLGELLARLERLRQALAAEGLFAESRKRKLPFLPGVVGLICGRDSAAERDVLENARRRWPAVRFEVREVAVQGDRAVPEVMAALEELDAHPEVDVIIIARGGGSLEDLLPFSDEALVRAVAAARTPVVSAIGHEQDTPLLDYVADLRASTPTDAAKKVVPDVGEQWELIRQLRDRARRVLEGGIAREEAWLASMRSRPVLANPVQEVERKIEQVFDLRDRGRRALTAALDRAGDNLAHIRARLHALSPATTLARGYAIVRRADGTVVRSAAEVAPGEELRLRFAEDGLVAIAQNREEDEL.

It belongs to the XseA family. Heterooligomer composed of large and small subunits.

Its subcellular location is the cytoplasm. It catalyses the reaction Exonucleolytic cleavage in either 5'- to 3'- or 3'- to 5'-direction to yield nucleoside 5'-phosphates.. Bidirectionally degrades single-stranded DNA into large acid-insoluble oligonucleotides, which are then degraded further into small acid-soluble oligonucleotides. In Thermobifida fusca (strain YX), this protein is Exodeoxyribonuclease 7 large subunit.